Here is a 337-residue protein sequence, read N- to C-terminus: UbiA prenyltransferase domain-containing protein 1 (337 aa).

Ala2 is subject to N-acetylalanine. 8 consecutive transmembrane segments (helical) span residues 82-102 (LLVG…LVNT), 133-153 (FGVF…CLSP), 159-179 (LALI…GIGF), 187-207 (LVIL…VQVG), 208-228 (SLAV…EAVL), 244-266 (IVTL…LLFL), 276-296 (THCS…FSLE), and 314-334 (LNLL…AGSL).

Belongs to the UbiA prenyltransferase family. In terms of assembly, interacts with HMGCR and SOAT1.

Its subcellular location is the endoplasmic reticulum membrane. It is found in the golgi apparatus membrane. The protein resides in the mitochondrion membrane. It carries out the reaction menadiol + (2E,6E,10E)-geranylgeranyl diphosphate = menaquinol-4 + diphosphate. The catalysed reaction is all-trans-decaprenyl diphosphate + 4-hydroxybenzoate = 4-hydroxy-3-(all-trans-decaprenyl)benzoate + diphosphate. It participates in quinol/quinone metabolism; menaquinone biosynthesis. It functions in the pathway cofactor biosynthesis; ubiquinone biosynthesis. Functionally, prenyltransferase that mediates the formation of menaquinone-4 (MK-4) and coenzyme Q10. MK-4 is a vitamin K2 isoform required for endothelial cell development. Mediates the conversion of phylloquinone (PK) into MK-4, probably by cleaving the side chain of phylloquinone (PK) to release 2-methyl-1,4-naphthoquinone (menadione; K3) and then prenylating it with geranylgeranyl pyrophosphate (GGPP) to form MK-4. Also plays a role in cardiovascular development independently of MK-4 biosynthesis, by acting as a coenzyme Q10 biosynthetic enzyme: coenzyme Q10, also named ubiquinone, plays an important antioxidant role in the cardiovascular system. Mediates biosynthesis of coenzyme Q10 in the Golgi membrane, leading to protect cardiovascular tissues from NOS3/eNOS-dependent oxidative stress. This Ailuropoda melanoleuca (Giant panda) protein is UbiA prenyltransferase domain-containing protein 1 (UBIAD1).